Consider the following 428-residue polypeptide: Sorting nexin-31 (428 aa).

The region spanning 1–107 is the PX domain; that stretch reads MHICIPVTEE…EYFKKLQMDT (107 aa).

It belongs to the sorting nexin family.

In terms of biological role, may be involved in protein trafficking. This is Sorting nexin-31 (snx31) from Xenopus tropicalis (Western clawed frog).